The following is a 277-amino-acid chain: NLP effector protein Pc109174 (277 aa).

Positions 1 to 19 (MNLVPALVLLLALAQTVLG) are cleaved as a signal peptide. The Hepta-peptide GHRHDWE motif signature appears at 119–125 (KSRHLWA). N-linked (GlcNAc...) asparagine glycosylation is present at Asn199.

This sequence belongs to the Necrosis inducing protein (NPP1) family.

It is found in the secreted. Its function is as follows. Secreted effector that contributes strongly to virulence during infection by P.capsici. Induces cell death in the Solanaceae, including hot pepper. The sequence is that of NLP effector protein Pc109174 from Phytophthora capsici.